Reading from the N-terminus, the 108-residue chain is DNA-directed RNA polymerase subunit omega (108 aa).

The disordered stretch occupies residues 1 to 32; the sequence is MTNSQSDAALAAVPDRFDPSAGGPGAYDTPLG.

Belongs to the RNA polymerase subunit omega family. As to quaternary structure, the RNAP catalytic core consists of 2 alpha, 1 beta, 1 beta' and 1 omega subunit. When a sigma factor is associated with the core the holoenzyme is formed, which can initiate transcription.

The enzyme catalyses RNA(n) + a ribonucleoside 5'-triphosphate = RNA(n+1) + diphosphate. Its function is as follows. Promotes RNA polymerase assembly. Latches the N- and C-terminal regions of the beta' subunit thereby facilitating its interaction with the beta and alpha subunits. The sequence is that of DNA-directed RNA polymerase subunit omega from Mycobacterium avium (strain 104).